Reading from the N-terminus, the 287-residue chain is Viomycin phosphotransferase (287 aa).

The active-site Proton acceptor is the aspartate 190.

Belongs to the aminoglycoside phosphotransferase family.

The enzyme catalyses viomycin + ATP = O-phosphoviomycin + ADP + H(+). In terms of biological role, the aminoglycoside phosphotransferases achieve inactivation of their antibiotic substrates by phosphorylation. The sequence is that of Viomycin phosphotransferase (vph) from Streptomyces vinaceus.